Consider the following 837-residue polypeptide: Neural cell adhesion molecule 2 (837 aa).

The N-terminal stretch at 1 to 19 is a signal peptide; the sequence is MSLLLSFYLLGLLVSSGQA. Over 20–697 the chain is Extracellular; it reads LLQVTISLSK…PNIIKDTLFN (678 aa). 5 Ig-like C2-type domains span residues 21–108, 113–202, 208–297, 302–396, and 401–491; these read LQVT…ATVV, QKLT…RDII, PPAI…AFLQ, PHII…MYLD, and PKFI…YILA. 2 disulfide bridges follow: Cys42/Cys93 and Cys136/Cys186. N-linked (GlcNAc...) asparagine glycosylation is found at Asn177 and Asn219. A disulfide bridge links Cys232 with Cys281. A glycan (N-linked (GlcNAc...) asparagine) is linked at Asn309. Cysteines 322 and 380 form a disulfide. Residues Asn406, Asn419, Asn445, Asn474, and Asn562 are each glycosylated (N-linked (GlcNAc...) asparagine). The cysteines at positions 422 and 475 are disulfide-linked. 2 Fibronectin type-III domains span residues 498 to 591 and 593 to 688; these read SPYG…TLPV and EPSP…PPKP. Residues 698-718 traverse the membrane as a helical segment; that stretch reads GLGLGAVIGLGVAALLLILVV. Residues 719 to 837 are Cytoplasmic-facing; sequence TDVSCFFIRQ…IQSKEDDSKA (119 aa). A compositionally biased stretch (basic and acidic residues) spans 764–785; it reads GSKEPIVEMRTEDERVTNHEDG. The segment at 764 to 818 is disordered; the sequence is GSKEPIVEMRTEDERVTNHEDGSPVNEPNETTPLTEPEKLPLKEEDGKEALNPET. Ser765 bears the Phosphoserine mark. A Phosphothreonine modification is found at Thr780. At Ser786 the chain carries Phosphoserine. A compositionally biased stretch (low complexity) spans 789–798; it reads NEPNETTPLT. A compositionally biased stretch (basic and acidic residues) spans 799–814; that stretch reads EPEKLPLKEEDGKEAL.

In terms of tissue distribution, expressed most strongly in adult and fetal brain.

It is found in the cell membrane. Its function is as follows. May play important roles in selective fasciculation and zone-to-zone projection of the primary olfactory axons. The polypeptide is Neural cell adhesion molecule 2 (NCAM2) (Homo sapiens (Human)).